A 736-amino-acid chain; its full sequence is Prolyl oligopeptidase dbiP (736 aa).

Residues serine 572, aspartate 656, and histidine 692 each act as charge relay system in the active site.

It belongs to the peptidase S9A family. Monomer.

It catalyses the reaction Hydrolysis of Pro-|-Xaa &gt;&gt; Ala-|-Xaa in oligopeptides.. It functions in the pathway mycotoxin biosynthesis. In terms of biological role, prolyl oligopeptidase; part of the gene cluster that mediates the biosynthesis of dendrothelin A, a highly methylated cyclic dodecapeptide showing slight nematodicidal activity. Excises and catalyzes the macrocyclization of the methylated core peptide of dbiMA to yield dendrothelin A. DbiP works in a two-step fashion with an initial cleavage at the N-terminus, followed by a second cleavage at the C-terminus of the core peptide. According to this mechanism, the free N-terminus of the core peptide, generated by the first cleavage, attacks the covalent intermediate of the second cleavage, which results in macrocyclization of the core peptide. The sequence is that of Prolyl oligopeptidase dbiP from Dendrothele bispora (strain CBS 962.96).